A 247-amino-acid chain; its full sequence is Carboxy-S-adenosyl-L-methionine synthase (247 aa).

S-adenosyl-L-methionine-binding positions include tyrosine 39, glycine 64–serine 66, aspartate 89–asparagine 90, aspartate 117–isoleucine 118, asparagine 132, and arginine 199.

The protein belongs to the class I-like SAM-binding methyltransferase superfamily. Cx-SAM synthase family. As to quaternary structure, homodimer.

The enzyme catalyses prephenate + S-adenosyl-L-methionine = carboxy-S-adenosyl-L-methionine + 3-phenylpyruvate + H2O. Catalyzes the conversion of S-adenosyl-L-methionine (SAM) to carboxy-S-adenosyl-L-methionine (Cx-SAM). The protein is Carboxy-S-adenosyl-L-methionine synthase of Pectobacterium atrosepticum (strain SCRI 1043 / ATCC BAA-672) (Erwinia carotovora subsp. atroseptica).